The primary structure comprises 329 residues: (+)-eremophilene synthase (329 aa).

2 residues coordinate Mg(2+): Asp91 and Glu96. The short motif at 91–95 (DDAYD) is the DDXXD motif element. A substrate-binding site is contributed by Arg185. 2 residues coordinate Mg(2+): Asn231 and Ser235. A substrate-binding site is contributed by Lys238. Glu239 provides a ligand contact to Mg(2+). 317-318 (RY) contacts substrate.

Belongs to the terpene synthase family. The cofactor is Mg(2+).

It catalyses the reaction (2E,6E)-farnesyl diphosphate = (+)-eremophilene + diphosphate. Its pathway is secondary metabolite biosynthesis; terpenoid biosynthesis. Functionally, catalyzes the conversion of (2E,6E)-farnesyl diphosphate (FPP) to yield the bicyclic sesquiterpene eremophilene via a 1,10-cyclization, which requires the abstraction of the pyrophosphate from FPP to yield the (E,E)-germacradienyl cation. The only accepted substrate is farnesyl diphosphate (FPP). This Sorangium cellulosum (strain So ce56) (Polyangium cellulosum (strain So ce56)) protein is (+)-eremophilene synthase.